Consider the following 280-residue polypeptide: UDP-2,3-diacylglucosamine pyrophosphatase LpxI (280 aa).

Substrate contacts are provided by residues Ala-12, 74-75 (NV), Gln-169, 187-188 (TD), Lys-214, and 226-233 (LPTIGVAT).

It belongs to the LpxI family. Homodimer. Mg(2+) serves as cofactor.

Its subcellular location is the cell inner membrane. It catalyses the reaction UDP-2-N,3-O-bis[(3R)-3-hydroxytetradecanoyl]-alpha-D-glucosamine + H2O = 2-N,3-O-bis[(3R)-3-hydroxytetradecanoyl]-alpha-D-glucosaminyl 1-phosphate + UMP + 2 H(+). It participates in glycolipid biosynthesis; lipid IV(A) biosynthesis; lipid IV(A) from (3R)-3-hydroxytetradecanoyl-[acyl-carrier-protein] and UDP-N-acetyl-alpha-D-glucosamine: step 4/6. Inhibited by high concentrations of Cu(2+) and Zn(2+). Completely inhibited by EDTA in vitro. Functionally, hydrolyzes the pyrophosphate bond of UDP-2,3-diacylglucosamine to form 2,3-diacylglucosamine 1-phosphate (lipid X) and UMP by catalyzing the attack of water at the beta-P atom. Involved in the biosynthesis of lipid A, a phosphorylated glycolipid that anchors the lipopolysaccharide to the outer membrane of the cell. Can functionally complement lpxH deficiency in E.coli. Cannot use CDP-diacylglycerol as substrate. This is UDP-2,3-diacylglucosamine pyrophosphatase LpxI from Caulobacter vibrioides (strain ATCC 19089 / CIP 103742 / CB 15) (Caulobacter crescentus).